Consider the following 515-residue polypeptide: Maturase K (515 aa).

This sequence belongs to the intron maturase 2 family. MatK subfamily.

It is found in the plastid. The protein resides in the chloroplast. Functionally, usually encoded in the trnK tRNA gene intron. Probably assists in splicing its own and other chloroplast group II introns. The chain is Maturase K from Larix laricina (Tamarack).